The chain runs to 763 residues: Eukaryotic translation initiation factor 3 subunit B (763 aa).

Residues methionine 1–aspartate 136 are sufficient for interaction with HCR1 and TIF32. A sufficient for interaction with PIC8 region spans residues arginine 28–phenylalanine 261. Serine 61 bears the Phosphoserine mark. Residue tyrosine 67 is modified to Phosphotyrosine. One can recognise an RRM domain in the interval glutamine 77 to aspartate 162. 6 WD repeats span residues arginine 228 to arginine 266, valine 277 to threonine 325, leucine 373 to threonine 416, glutamate 484 to tyrosine 524, isoleucine 544 to isoleucine 589, and proline 605 to aspartate 650. Position 669 is a phosphoserine (serine 669).

It belongs to the eIF-3 subunit B family. The eukaryotic translation initiation factor 3 (eIF-3) core complex is composed of TIF32, PRT1, NIP1, TIF34 and TIF35. A subcomplex of TIF32, NIP1 and PRT1 mediates the interaction with eIF-1, TIF5/eIF-5 and HCR1. The factors eIF-1, eIF-2, eIF-3, TIF5/eIF-5 and methionyl-tRNAi form a multifactor complex (MFC) that may bind to the 40S ribosome.

The protein resides in the cytoplasm. Its function is as follows. RNA-binding component of the eukaryotic translation initiation factor 3 (eIF-3) complex, which is involved in protein synthesis of a specialized repertoire of mRNAs and, together with other initiation factors, stimulates binding of mRNA and methionyl-tRNAi to the 40S ribosome. The eIF-3 complex specifically targets and initiates translation of a subset of mRNAs involved in cell proliferation. This Saccharomyces cerevisiae (strain ATCC 204508 / S288c) (Baker's yeast) protein is Eukaryotic translation initiation factor 3 subunit B.